A 309-amino-acid polypeptide reads, in one-letter code: Aspartate carbamoyltransferase catalytic subunit (309 aa).

Carbamoyl phosphate-binding residues include Arg55 and Thr56. Lys85 is a binding site for L-aspartate. Residues Arg106, His135, and Gln138 each coordinate carbamoyl phosphate. The L-aspartate site is built by Arg168 and Arg230. 2 residues coordinate carbamoyl phosphate: Leu268 and Pro269.

This sequence belongs to the aspartate/ornithine carbamoyltransferase superfamily. ATCase family. In terms of assembly, heterododecamer (2C3:3R2) of six catalytic PyrB chains organized as two trimers (C3), and six regulatory PyrI chains organized as three dimers (R2).

It carries out the reaction carbamoyl phosphate + L-aspartate = N-carbamoyl-L-aspartate + phosphate + H(+). It participates in pyrimidine metabolism; UMP biosynthesis via de novo pathway; (S)-dihydroorotate from bicarbonate: step 2/3. Its function is as follows. Catalyzes the condensation of carbamoyl phosphate and aspartate to form carbamoyl aspartate and inorganic phosphate, the committed step in the de novo pyrimidine nucleotide biosynthesis pathway. The sequence is that of Aspartate carbamoyltransferase catalytic subunit from Vibrio vulnificus (strain CMCP6).